A 146-amino-acid chain; its full sequence is Hemagglutinin component HA-17 type D (146 aa).

As to quaternary structure, botulinum toxins are produced as large progenitor toxins of 12S (M toxin, about 280 kDa) and 16S (L toxin, about 650 kDa). M toxin consists of a non-toxic, non-hemagglutinin component (NTNHA) and the neurotoxin (BoNT/D). L toxin consists of the M toxin and the 3 hemagglutinin (HA) subcomponents of 70, 33, and 17 kDa. The stoichiometry of the whole complex has been modeled as one BoNT/D, one NTNHA, three HA-70, six HA-33 and three HA-17. HA-33 and HA-17 crystallize as a heterotrimer with two HA-33 and one HA-17.

The protein resides in the secreted. Its function is as follows. The hemagglutinin (HA) component of the progenitor toxin protects the structural integrity of the neurotoxin; may increase internalization of the neurotoxin into the bloodstream of the host. Involved in binding to the small intestine through interactions with glycolipids and glycoproteins containing sialic acid moieties. The hemagglutinin complex composed of HA-70, HA-33 and HA-17 agglutinates erythrocytes, whereas the individual compenents do not. Erythrocyte agglutination also occurs with the entire toxin complex. This chain is Hemagglutinin component HA-17 type D, found in Clostridium botulinum D phage (Clostridium botulinum D bacteriophage).